Reading from the N-terminus, the 99-residue chain is Small ribosomal subunit protein uS17 (99 aa).

It belongs to the universal ribosomal protein uS17 family. As to quaternary structure, part of the 30S ribosomal subunit.

In terms of biological role, one of the primary rRNA binding proteins, it binds specifically to the 5'-end of 16S ribosomal RNA. In Thermosipho melanesiensis (strain DSM 12029 / CIP 104789 / BI429), this protein is Small ribosomal subunit protein uS17.